Here is a 1663-residue protein sequence, read N- to C-terminus: Glutamine-rich protein 2 (1663 aa).

5 disordered regions span residues 80-239 (HGGF…LVPA), 423-481 (GLVQ…GTGQ), 575-615 (AQPR…QHGL), 880-925 (TYQQ…QVYP), and 948-984 (RGPGYLSADQHGQEGLDPNRTRASDRHGIPAQKAPGQ). Composition is skewed to polar residues over residues 84-103 (TSLTSPEGTLSGDSTKQPSI) and 131-150 (GVSSREQSKVPSGTGRQQQP). The segment covering 171–182 (SDSDRHRSREKL) has biased composition (basic and acidic residues). Residues 206–217 (QPSSVPASQSQV) are compositionally biased toward low complexity. A compositionally biased stretch (basic and acidic residues) spans 958–975 (HGQEGLDPNRTRASDRHG). Coiled-coil stretches lie at residues 1085 to 1160 (KTVK…MENS) and 1286 to 1325 (EDHRQKQKDIAMLYQGLEKLEKEKANREHLEMEIDVKADK). Residues 1609–1619 (TRLPGILRKDS) are compositionally biased toward basic and acidic residues. The disordered stretch occupies residues 1609 to 1663 (TRLPGILRKDSSGTSKRKSQQPRPHVHRPPSLSSNGQLPSRPQSAQISAGNTSER). Positions 1623 to 1636 (SKRKSQQPRPHVHR) are enriched in basic residues. Positions 1639–1663 (SLSSNGQLPSRPQSAQISAGNTSER) are enriched in polar residues.

In terms of assembly, interacts with AKAP3, ODF2 and TSSK4. Interacts with AKAP4. In terms of tissue distribution, expressed in the sperm.

It is found in the nucleus membrane. The protein localises to the nucleus. The protein resides in the cytoplasm. It localises to the cell projection. Its subcellular location is the cilium. It is found in the flagellum. Has an essential role in the formation of sperm flagella and flagellar structure maintainance. It acts as a suppressor of ubiquitination and degradation of proteins involved in flagellar development and motility. The protein is Glutamine-rich protein 2 (QRICH2) of Homo sapiens (Human).